We begin with the raw amino-acid sequence, 1221 residues long: DNA topoisomerase 2 (1221 aa).

ATP is bound by residues Asn65, Asn94, 122 to 124 (SSN), 135 to 142 (GRHGYGAK), and 352 to 354 (QNK). One can recognise a Toprim domain in the interval 432-546 (RTLIVTEGDS…SLLVRNPGFI (115 aa)). Mg(2+)-binding residues include Glu438, Asp515, and Asp517. One can recognise a Topo IIA-type catalytic domain in the interval 681–1097 (LAHSVDGLKP…TPVQLWLGEL (417 aa)). The active-site O-(5'-phospho-DNA)-tyrosine intermediate is Tyr771. Residues 952-961 (GLTQRIHING) are interaction with DNA. The interval 1158–1198 (VPPPTKRGAGGRSDGDGGATAAGAAAAVGGRGEKKGPGRAG) is disordered. Gly residues predominate over residues 1165-1177 (GAGGRSDGDGGAT).

The protein belongs to the type II topoisomerase family. As to quaternary structure, homodimer. Requires Mg(2+) as cofactor. It depends on Mn(2+) as a cofactor. Ca(2+) serves as cofactor.

It localises to the nucleus. The enzyme catalyses ATP-dependent breakage, passage and rejoining of double-stranded DNA.. Functionally, control of topological states of DNA by transient breakage and subsequent rejoining of DNA strands. Topoisomerase II makes double-strand breaks. The protein is DNA topoisomerase 2 (TOP2) of Trypanosoma brucei brucei.